The following is a 136-amino-acid chain: Small ribosomal subunit protein uS19 (136 aa).

A disordered region spans residues 117–136 (VQHGDPGMGATRSSMFVPLK).

This sequence belongs to the universal ribosomal protein uS19 family.

Protein S19 forms a complex with S13 that binds strongly to the 16S ribosomal RNA. The chain is Small ribosomal subunit protein uS19 from Methanobrevibacter smithii (strain ATCC 35061 / DSM 861 / OCM 144 / PS).